The following is a 297-amino-acid chain: Protein muscleblind (297 aa).

2 consecutive C3H1-type zinc fingers follow at residues 18-46 and 52-80; these read WLQLEVCREFQRNKCSRQDTECKFAHPPA and NGKVTACYDSIKGRCNRDKPPCKYFHPPQ.

Belongs to the muscleblind family. Expressed in embryonic muscle cells.

It localises to the nucleus. In terms of biological role, required for terminal differentiation of photoreceptor cells. Vital for embryonic development. The polypeptide is Protein muscleblind (mbl) (Drosophila melanogaster (Fruit fly)).